We begin with the raw amino-acid sequence, 396 residues long: Elongation factor Tu (396 aa).

Residues 10–206 (KPHCNIGTIG…AVDAYIPQPE (197 aa)) form the tr-type G domain. A G1 region spans residues 19 to 26 (GHVDHGKT). 19–26 (GHVDHGKT) is a GTP binding site. Thr26 is a binding site for Mg(2+). Residues 60-64 (GITIS) form a G2 region. The G3 stretch occupies residues 81 to 84 (DCPG). GTP-binding positions include 81–85 (DCPGH) and 136–139 (NKCD). The tract at residues 136-139 (NKCD) is G4. The G5 stretch occupies residues 174–176 (SAL).

The protein belongs to the TRAFAC class translation factor GTPase superfamily. Classic translation factor GTPase family. EF-Tu/EF-1A subfamily. As to quaternary structure, monomer.

The protein resides in the cytoplasm. It catalyses the reaction GTP + H2O = GDP + phosphate + H(+). Functionally, GTP hydrolase that promotes the GTP-dependent binding of aminoacyl-tRNA to the A-site of ribosomes during protein biosynthesis. This Rhodopseudomonas palustris (strain HaA2) protein is Elongation factor Tu.